A 292-amino-acid chain; its full sequence is ATP synthase gamma chain (292 aa).

This sequence belongs to the ATPase gamma chain family. In terms of assembly, F-type ATPases have 2 components, CF(1) - the catalytic core - and CF(0) - the membrane proton channel. CF(1) has five subunits: alpha(3), beta(3), gamma(1), delta(1), epsilon(1). CF(0) has three main subunits: a, b and c.

The protein resides in the cell inner membrane. Its function is as follows. Produces ATP from ADP in the presence of a proton gradient across the membrane. The gamma chain is believed to be important in regulating ATPase activity and the flow of protons through the CF(0) complex. The chain is ATP synthase gamma chain from Nitrobacter hamburgensis (strain DSM 10229 / NCIMB 13809 / X14).